Here is a 1092-residue protein sequence, read N- to C-terminus: Elongation factor 3 (1092 aa).

Val92 is a binding site for ADP. HEAT repeat units lie at residues 95–133 (MVKTKILHGIATGLHNTKQPVAREGAITAIETLIKSPVS), 138–175 (PYMITFIPVLLERLSDKAKTVCLAADSALKALITRLTP), 177–214 (ATKQVLPLLLAGIEYSQKWQTKVGALELMQSLSKTAPR), 218–255 (TAVPDLVPPLSEVMHDTKAEAKNAGRQTMEAICELINN), 257–293 (DIEKFIPALIDTIANPEKVPDTVHLLGATTFVSEVLP), 294–331 (PTLAIMVPLLSRGLNERQTAIKRKAAVIIINMCKLVEK), and 333–370 (QIIAPFLPRLLPTLEKIQDDVADPECRQVCQNATKILT). Glu454 contacts ADP. ABC transporter domains are found at residues 486–704 (EELC…YYEL) and 730–1044 (LKVQ…DKNK). ADP-binding residues include Asn766, Glu973, Asn976, and His1002. 2 disordered regions span residues 1023 to 1044 (TPTGHNWVSGQGSGPRLEDKNK) and 1063 to 1092 (SKLSGKDLRKKRKEREARRKRGEEVSDDDE). The span at 1063–1075 (SKLSGKDLRKKRK) shows a compositional bias: basic residues. Basic and acidic residues predominate over residues 1076–1086 (EREARRKRGEE).

This sequence belongs to the ABC transporter superfamily. ABCF family. EF3 subfamily.

The protein localises to the cytoplasm. Its subcellular location is the cytosol. It catalyses the reaction ATP + H2O = ADP + phosphate + H(+). The protein operates within protein biosynthesis; polypeptide chain elongation. Its function is as follows. Ribosome-dependent ATPase that functions in cytoplasmic translation elongation. Required for the ATP-dependent release of deacylated tRNA from the ribosomal E-site during protein biosynthesis. Stimulates the eEF1A-dependent binding of aminoacyl-tRNA to the ribosomal A-site, which has reduced affinity for tRNA as long as the E-site is occupied. Assists translation termination by stimulating the release of nascent protein from the ribosome by release factors. The chain is Elongation factor 3 from Gonapodya prolifera (strain JEL478) (Monoblepharis prolifera).